The following is a 458-amino-acid chain: Exodeoxyribonuclease 7 large subunit (458 aa).

The protein belongs to the XseA family. Heterooligomer composed of large and small subunits.

It is found in the cytoplasm. The catalysed reaction is Exonucleolytic cleavage in either 5'- to 3'- or 3'- to 5'-direction to yield nucleoside 5'-phosphates.. Functionally, bidirectionally degrades single-stranded DNA into large acid-insoluble oligonucleotides, which are then degraded further into small acid-soluble oligonucleotides. This Shouchella clausii (strain KSM-K16) (Alkalihalobacillus clausii) protein is Exodeoxyribonuclease 7 large subunit.